The following is a 196-amino-acid chain: Kunitz trypsin inhibitor 5 (196 aa).

Positions 1 to 19 (MSSLLYIFLLLAVFISHRG) are cleaved as a signal peptide. C156 and C167 form a disulfide bridge.

Belongs to the protease inhibitor I3 (leguminous Kunitz-type inhibitor) family.

The protein resides in the endoplasmic reticulum. Functionally, can inhibit both serine proteases and cysteine proteases. May be involved in the modulation of the proteases that participate in the hydrolysis of dietary proteins in the gut of spider mites. The polypeptide is Kunitz trypsin inhibitor 5 (Arabidopsis thaliana (Mouse-ear cress)).